Reading from the N-terminus, the 753-residue chain is Catalase-peroxidase (753 aa).

A cross-link (tryptophyl-tyrosyl-methioninium (Trp-Tyr) (with M-269)) is located at residues Trp-91–Tyr-243. His-92 serves as the catalytic Proton acceptor. The tryptophyl-tyrosyl-methioninium (Tyr-Met) (with W-91) cross-link spans Tyr-243–Met-269. His-284 provides a ligand contact to heme b.

The protein belongs to the peroxidase family. Peroxidase/catalase subfamily. As to quaternary structure, homodimer or homotetramer. Requires heme b as cofactor. In terms of processing, formation of the three residue Trp-Tyr-Met cross-link is important for the catalase, but not the peroxidase activity of the enzyme.

The catalysed reaction is H2O2 + AH2 = A + 2 H2O. It carries out the reaction 2 H2O2 = O2 + 2 H2O. Functionally, bifunctional enzyme with both catalase and broad-spectrum peroxidase activity. The sequence is that of Catalase-peroxidase from Paraburkholderia xenovorans (strain LB400).